An 857-amino-acid polypeptide reads, in one-letter code: MKKIKWLSGQPKVTSGVTWGMPWKKGELKKGDRLALMNENAETRYVQSEPSAYWPDGSIKWTKHAAVFGGQENQSFTVHKREVPQPTESLSILETEHDIQVDTGALVCTIHKTGSDFIQSLQINGKPIAAGGRLVAIRETRKESAAKMVLLHERSVSFIKRAAIEQSGPVKAVVKIEGVHVLHKTYEEWLPFVIRLTFYAGLSEIGLVHTQLIDRSGKLEFVKGLGIEFDLFLEGEPYNRHFRFAGEKGMYKEPAQLFGTRKFNERYPLYEKQINGEMLSPDEEHKEWFAHGTQNAVWDDVKIVQDSSDHYSLSKRTGKDYAWVGMLHGSRAKGLCYAGGKNGGVALGLRYFFEKYPSALEITGLAGSRPKMTIWLWPPDGEAMDLRHYTGNTHVASAYEGFDEMRSDPTGIANTNEISLACFSHMPSDEVLNALADKWQAPPLIVCEPDVYYESKALGVWSIIDTSHPLKKELEEQLDAAFLFYKKEVEQRRWYGFWHYGDVMHTYDPIRHMWRYDLGGYAWQNNELVPTLWLWQAFFRSGREDIFRMAEAMTRHTSETDSFHLGEYAGLGSRHNVVHWGCGCKEARISMAGLHKFYYYLTGDDRTGDLLTEVKDADYALVKTDPMRAFYEKGKHPTHARTGPDWAAFCSNWLAEWERTENSEYLKKIETGINCLKRLPLRLLSGPTFEYDPATSMLHHMGDGIAGGYHMIIAFGAPQVWMELAELLDDWEWEDMLSEFGEFYTLSDEEKRKKSGGALHDGHFHWPMFAAGMTAYAARKKQDPHLAAKAWNLLLEDKLSHTPLPIKPERIETWTQLEELPWVTTNTVSQWCLNVIAALELIGDSLPAKKETSGKKG.

This is an uncharacterized protein from Bacillus subtilis (strain 168).